A 251-amino-acid chain; its full sequence is Putative F-box protein PP2-B12 (251 aa).

One can recognise an F-box domain in the interval 1–46 (MNFLDLPEECIATMISFTSPFDACRISAVSKLLRSAADSNTTWERF).

This Arabidopsis thaliana (Mouse-ear cress) protein is Putative F-box protein PP2-B12 (PP2B12).